Consider the following 341-residue polypeptide: RNA 3'-terminal phosphate cyclase (341 aa).

ATP-binding positions include Q102 and 283–287 (HLADQ). Catalysis depends on H308, which acts as the Tele-AMP-histidine intermediate.

Belongs to the RNA 3'-terminal cyclase family. Type 1 subfamily.

It localises to the cytoplasm. The catalysed reaction is a 3'-end 3'-phospho-ribonucleotide-RNA + ATP = a 3'-end 2',3'-cyclophospho-ribonucleotide-RNA + AMP + diphosphate. Its function is as follows. Catalyzes the conversion of 3'-phosphate to a 2',3'-cyclic phosphodiester at the end of RNA. The mechanism of action of the enzyme occurs in 3 steps: (A) adenylation of the enzyme by ATP; (B) transfer of adenylate to an RNA-N3'P to produce RNA-N3'PP5'A; (C) and attack of the adjacent 2'-hydroxyl on the 3'-phosphorus in the diester linkage to produce the cyclic end product. The biological role of this enzyme is unknown but it is likely to function in some aspects of cellular RNA processing. This chain is RNA 3'-terminal phosphate cyclase, found in Pseudomonas aeruginosa (strain UCBPP-PA14).